Consider the following 463-residue polypeptide: Elongation factor 1-alpha 2 (463 aa).

Gly2 carries the n,N,N-trimethylglycine modification. Residues 5 to 242 form the tr-type G domain; the sequence is KTHINIVVIG…DTILPPTRPT (238 aa). The interval 14 to 21 is G1; the sequence is GHVDSGKS. Residues Asp17, Ser18, Gly19, Lys20, Ser21, and Thr22 each coordinate GTP. Position 17 (Asp17) interacts with Mg(2+). N6,N6,N6-trimethyllysine; alternate is present on Lys36. Lys36 is subject to N6,N6-dimethyllysine; alternate. N6-methyllysine; alternate is present on Lys36. N6,N6,N6-trimethyllysine is present on Lys55. Position 55 is an N6,N6-dimethyllysine (Lys55). The interval 70 to 74 is G2; that stretch reads GITID. Lys79 carries the post-translational modification N6,N6,N6-trimethyllysine. The G3 stretch occupies residues 91-94; the sequence is DAPG. Residues Asn153, Lys154, and Asp156 each coordinate GTP. Residues 153–156 form a G4 region; that stretch reads NKMD. Residue Ser163 is modified to Phosphoserine. At Lys165 the chain carries N6,N6-dimethyllysine; alternate. Residue Lys165 is modified to N6-methyllysine; alternate. An N6,N6,N6-trimethyllysine; alternate; by EEF1AKMT3 modification is found at Lys165. An N6-acetyllysine modification is found at Lys179. GTP contacts are provided by Ser194, Gly195, and Trp196. Positions 194-196 are G5; it reads SGW. Ser224 is subject to Phosphoserine. Position 239 is a phosphothreonine (Thr239). Residues Glu301 and Glu374 each carry the 5-glutamyl glycerylphosphorylethanolamine modification. The residue at position 439 (Lys439) is an N6-acetyllysine. Residues 444-463 form a disordered region; the sequence is KSGGAGKVTKSAQKAQKAGK.

This sequence belongs to the TRAFAC class translation factor GTPase superfamily. Classic translation factor GTPase family. EF-Tu/EF-1A subfamily. In terms of assembly, homodimer; arranged in a 'head to tail' dimer configuration. Trimethylated at Lys-165 by EEF1AKMT3. Mono-, di-, and trimethylated at Lys-36 by EEF1AKMT4; trimethylated form is predominant. Methylation by EEF1AKMT4 contributes to the fine-tuning of translation rates for a subset of tRNAs. Trimethylated at the N-terminus and dimethylated at Lys-55 by METTL13.

It is found in the endoplasmic reticulum membrane. It carries out the reaction GTP + H2O = GDP + phosphate + H(+). In terms of biological role, translation elongation factor that catalyzes the GTP-dependent binding of aminoacyl-tRNA (aa-tRNA) to the A-site of ribosomes during the elongation phase of protein synthesis. Base pairing between the mRNA codon and the aa-tRNA anticodon promotes GTP hydrolysis, releasing the aa-tRNA from EEF1A1 and allowing its accommodation into the ribosome. The growing protein chain is subsequently transferred from the P-site peptidyl tRNA to the A-site aa-tRNA, extending it by one amino acid through ribosome-catalyzed peptide bond formation. This chain is Elongation factor 1-alpha 2 (Eef1a2), found in Rattus norvegicus (Rat).